The primary structure comprises 284 residues: Undecaprenyl-diphosphatase (284 aa).

A run of 8 helical transmembrane segments spans residues 7–27 (IILG…TGHL), 44–64 (EMFD…LYFH), 90–110 (LWLK…PLND), 116–136 (FYHF…FIVI), 167–187 (VLSL…ALLV), 197–217 (FTFF…ILHF), 229–249 (FGVL…AIKF), and 259–279 (FTFF…YAMF).

The protein belongs to the UppP family.

Its subcellular location is the cell membrane. The catalysed reaction is di-trans,octa-cis-undecaprenyl diphosphate + H2O = di-trans,octa-cis-undecaprenyl phosphate + phosphate + H(+). Catalyzes the dephosphorylation of undecaprenyl diphosphate (UPP). Confers resistance to bacitracin. This chain is Undecaprenyl-diphosphatase, found in Lactococcus lactis subsp. lactis (strain IL1403) (Streptococcus lactis).